The sequence spans 112 residues: Large ribosomal subunit protein eL22 (112 aa).

This sequence belongs to the eukaryotic ribosomal protein eL22 family. In terms of assembly, component of the large ribosomal subunit.

Its subcellular location is the cytoplasm. The protein is Large ribosomal subunit protein eL22 (RPL22) of Encephalitozoon cuniculi (strain GB-M1) (Microsporidian parasite).